A 100-amino-acid polypeptide reads, in one-letter code: Coiled-coil domain-containing protein 167 (100 aa).

Residues 14 to 81 (VASEIDRVEE…VLRGENRRNM (68 aa)) are a coiled coil. The helical transmembrane segment at 82–99 (MLSVALLAISALFYYTFI) threads the bilayer.

The protein resides in the membrane. The chain is Coiled-coil domain-containing protein 167 (ccdc167) from Danio rerio (Zebrafish).